A 224-amino-acid polypeptide reads, in one-letter code: Probable Brix domain-containing ribosomal biogenesis protein (224 aa).

Residues 1–196 (MMLITTSHRP…IWIMEDGRRW (196 aa)) form the Brix domain.

Functionally, probably involved in the biogenesis of the ribosome. This Pyrococcus horikoshii (strain ATCC 700860 / DSM 12428 / JCM 9974 / NBRC 100139 / OT-3) protein is Probable Brix domain-containing ribosomal biogenesis protein.